The primary structure comprises 131 residues: Ribonuclease VapC13 (131 aa).

The region spanning 2–128 (ILVDSNIPMY…RGFDSYPGIK (127 aa)) is the PINc domain. Mg(2+)-binding residues include Asp-5 and Asp-99.

It belongs to the PINc/VapC protein family. Requires Mg(2+) as cofactor.

It is found in the secreted. Toxic component of a type II toxin-antitoxin (TA) system. An RNase. The cognate antitoxin is VapB13. The sequence is that of Ribonuclease VapC13 from Mycobacterium tuberculosis (strain ATCC 25618 / H37Rv).